Reading from the N-terminus, the 488-residue chain is Proline--tRNA ligase (488 aa).

This sequence belongs to the class-II aminoacyl-tRNA synthetase family. ProS type 3 subfamily. In terms of assembly, homodimer.

It localises to the cytoplasm. The enzyme catalyses tRNA(Pro) + L-proline + ATP = L-prolyl-tRNA(Pro) + AMP + diphosphate. Catalyzes the attachment of proline to tRNA(Pro) in a two-step reaction: proline is first activated by ATP to form Pro-AMP and then transferred to the acceptor end of tRNA(Pro). The chain is Proline--tRNA ligase from Pyrobaculum islandicum (strain DSM 4184 / JCM 9189 / GEO3).